Here is a 289-residue protein sequence, read N- to C-terminus: Ribosomal RNA small subunit methyltransferase A (289 aa).

N28, L30, G55, E76, D101, and N125 together coordinate S-adenosyl-L-methionine.

This sequence belongs to the class I-like SAM-binding methyltransferase superfamily. rRNA adenine N(6)-methyltransferase family. RsmA subfamily.

Its subcellular location is the cytoplasm. It catalyses the reaction adenosine(1518)/adenosine(1519) in 16S rRNA + 4 S-adenosyl-L-methionine = N(6)-dimethyladenosine(1518)/N(6)-dimethyladenosine(1519) in 16S rRNA + 4 S-adenosyl-L-homocysteine + 4 H(+). Its function is as follows. Specifically dimethylates two adjacent adenosines (A1518 and A1519) in the loop of a conserved hairpin near the 3'-end of 16S rRNA in the 30S particle. May play a critical role in biogenesis of 30S subunits. The chain is Ribosomal RNA small subunit methyltransferase A from Clostridioides difficile (strain 630) (Peptoclostridium difficile).